The chain runs to 194 residues: ATP-dependent Clp protease proteolytic subunit (194 aa).

Residue Ser97 is the Nucleophile of the active site. His122 is an active-site residue.

This sequence belongs to the peptidase S14 family. Fourteen ClpP subunits assemble into 2 heptameric rings which stack back to back to give a disk-like structure with a central cavity, resembling the structure of eukaryotic proteasomes.

It localises to the cytoplasm. The enzyme catalyses Hydrolysis of proteins to small peptides in the presence of ATP and magnesium. alpha-casein is the usual test substrate. In the absence of ATP, only oligopeptides shorter than five residues are hydrolyzed (such as succinyl-Leu-Tyr-|-NHMec, and Leu-Tyr-Leu-|-Tyr-Trp, in which cleavage of the -Tyr-|-Leu- and -Tyr-|-Trp bonds also occurs).. Functionally, cleaves peptides in various proteins in a process that requires ATP hydrolysis. Has a chymotrypsin-like activity. Plays a major role in the degradation of misfolded proteins. This chain is ATP-dependent Clp protease proteolytic subunit, found in Carsonella ruddii (strain PV).